Consider the following 298-residue polypeptide: Cyclin-dependent kinase 2 homolog (298 aa).

The Protein kinase domain occupies 4 to 284 (YHKMEKIGEG…AKEALKHDYF (281 aa)). ATP-binding positions include 10–18 (IGEGTYGVV) and K32. A Phosphothreonine modification is found at T14. Residue Y15 is modified to Phosphotyrosine. The active-site Proton acceptor is D125. At T158 the chain carries Phosphothreonine.

Belongs to the protein kinase superfamily. CMGC Ser/Thr protein kinase family. CDC2/CDKX subfamily. May form a complex composed of at least the catalytic subunit CRK2 and a cyclin. Mg(2+) serves as cofactor.

The protein localises to the cytoplasm. The enzyme catalyses L-seryl-[protein] + ATP = O-phospho-L-seryl-[protein] + ADP + H(+). It carries out the reaction L-threonyl-[protein] + ATP = O-phospho-L-threonyl-[protein] + ADP + H(+). It catalyses the reaction [DNA-directed RNA polymerase] + ATP = phospho-[DNA-directed RNA polymerase] + ADP + H(+). Phosphorylation at Thr-14 or Tyr-15 inactivates the enzyme, while phosphorylation at Thr-158 activates it. In terms of biological role, serine/threonine-protein kinase. Involved in the control of the cell cycle. Required for entry into S-phase and mitosis. Probable component of the kinase complex that phosphorylates the repetitive C-terminus of RNA polymerase II. The chain is Cyclin-dependent kinase 2 homolog from Theileria parva (East coast fever infection agent).